The primary structure comprises 285 residues: Undecaprenyl-diphosphatase (285 aa).

The next 7 membrane-spanning stretches (helical) occupy residues 40–60 (GPLIDVAVHVGSLLAIIVYFF), 89–109 (LFWWIVLGTIPAVAFGLAIKL), 137–157 (DLIAFNLIVYGIALGLADWLG), 171–191 (GLIVGIAQALAIIPGTSRSGV), 209–229 (FSFLLSIPAVAGAGVLIVPEI), 241–261 (LIAGVLTFIAAFLTMAFLMNF), and 265–285 (ASMLVFVFYRVAMGCALLAFF).

This sequence belongs to the UppP family.

The protein resides in the cell inner membrane. The catalysed reaction is di-trans,octa-cis-undecaprenyl diphosphate + H2O = di-trans,octa-cis-undecaprenyl phosphate + phosphate + H(+). Catalyzes the dephosphorylation of undecaprenyl diphosphate (UPP). Confers resistance to bacitracin. The polypeptide is Undecaprenyl-diphosphatase (Erythrobacter litoralis (strain HTCC2594)).